The sequence spans 509 residues: Cysteine--tRNA ligase (509 aa).

Residue C19 coordinates Zn(2+). The 'HIGH' region motif lies at 21–31 (PTVYNDAHIGH). Residues C213, H238, and E242 each contribute to the Zn(2+) site. The short motif at 284–288 (KMSKS) is the 'KMSKS' region element. Residue K287 participates in ATP binding.

It belongs to the class-I aminoacyl-tRNA synthetase family. Zn(2+) serves as cofactor.

The enzyme catalyses tRNA(Cys) + L-cysteine + ATP = L-cysteinyl-tRNA(Cys) + AMP + diphosphate. The sequence is that of Cysteine--tRNA ligase (CARS) from Acanthamoeba polyphaga (Amoeba).